The following is a 122-amino-acid chain: Basic phospholipase A2 10 (122 aa).

Disulfide bonds link cysteine 26/cysteine 114, cysteine 28/cysteine 43, cysteine 42/cysteine 94, cysteine 48/cysteine 122, cysteine 49/cysteine 87, cysteine 56/cysteine 80, and cysteine 74/cysteine 85. Ca(2+)-binding residues include tyrosine 27, glycine 29, and glycine 31. The active site involves histidine 46. Aspartate 47 contacts Ca(2+). The active site involves aspartate 88.

It depends on Ca(2+) as a cofactor. As to expression, expressed by the venom gland.

The protein localises to the secreted. It catalyses the reaction a 1,2-diacyl-sn-glycero-3-phosphocholine + H2O = a 1-acyl-sn-glycero-3-phosphocholine + a fatty acid + H(+). Its activity is regulated as follows. Inhibited by chemical modifications mediated by p-BPB, anhydrous acetic acid and NBSF. Its function is as follows. Snake venom phospholipase A2 (PLA2) that has a strong dose-dependent anticoagulant effect. In vivo, intramuscular and intervenal injection causes muscle necrosis. Induces moderate edema in the mouse foot pad. PLA2 catalyzes the calcium-dependent hydrolysis of the 2-acyl groups in 3-sn-phosphoglycerides. This is Basic phospholipase A2 10 from Crotalus durissus cumanensis (South American rattlesnake).